Here is a 216-residue protein sequence, read N- to C-terminus: ADP-sugar pyrophosphatase (216 aa).

Met-1 is subject to N-acetylmethionine. 2 positions are modified to phosphoserine: Ser-3 and Ser-10. Trp-28 lines the substrate pocket. Lys-42 participates in a covalent cross-link: Glycyl lysine isopeptide (Lys-Gly) (interchain with G-Cter in SUMO2). Thr-45 carries the phosphothreonine modification. Substrate is bound by residues 46-47 (WE) and Arg-51. The region spanning 57–194 (QTADGVAVIP…EEHLTVDARV (138 aa)) is the Nudix hydrolase domain. Phosphotyrosine is present on Tyr-74. Arg-84 lines the substrate pocket. Mg(2+) is bound at residue Ala-96. Residues 97–118 (GLIDDGETPEAAALRELEEETG) carry the Nudix box motif. Residue Leu-98 coordinates substrate. Mg(2+) contacts are provided by Glu-112 and Glu-116. Asp-133 contacts substrate. Residue Glu-163 participates in Mg(2+) binding. N6-acetyllysine occurs at positions 207 and 215.

Belongs to the Nudix hydrolase family. Homodimer. Interacts with PARG. It depends on Mg(2+) as a cofactor. Post-translationally, phosphorylation at Thr-45 is required for homodimer stability; dephosphorylation results in destabilization of the homodimer. Dephosphorylation at Thr-45 promotes the ATP-synthesis activity.

Its subcellular location is the nucleus. The catalysed reaction is D-ribose 5-phosphate + ATP + H(+) = ADP-D-ribose + diphosphate. It catalyses the reaction ADP-D-ribose + H2O = D-ribose 5-phosphate + AMP + 2 H(+). It carries out the reaction 8-oxo-dGDP + H2O = 8-oxo-dGMP + phosphate + H(+). Enzyme that can either act as an ADP-sugar pyrophosphatase in absence of diphosphate or catalyze the synthesis of ATP in presence of diphosphate. In absence of diphosphate, hydrolyzes with similar activities various modified nucleoside diphosphates such as ADP-ribose, ADP-mannose, ADP-glucose, 8-oxo-GDP and 8-oxo-dGDP. Can also hydrolyze other nucleotide sugars with low activity. In presence of diphosphate, mediates the synthesis of ATP in the nucleus by catalyzing the conversion of ADP-ribose to ATP and ribose 5-phosphate. Nuclear ATP synthesis takes place when dephosphorylated at Thr-45. Nuclear ATP generation is required for extensive chromatin remodeling events that are energy-consuming. Does not play a role in U8 snoRNA decapping activity. Binds U8 snoRNA. The chain is ADP-sugar pyrophosphatase from Pongo abelii (Sumatran orangutan).